A 433-amino-acid polypeptide reads, in one-letter code: MSDLTDIQEDITRHEQQLIVARQKLKDAERAVEVDPDDVNKNTLQARQQTVSALEDKLADYKRRMADAVSRKKMDTKPTDPTGIEPDDHLKERSSLRYGNVLDVNAIDIEEPSGQTADWYTIGVYVIGFTLPIILKALYMLSTRGRQTVKENKGTRIRFKDDTSFEDINGIRRPKHLYVSMPTAQSTMKAEELTPGRFRTIVCGLFPTQIQVRNIMSPVMGVIGFSFFVKDWSERIREFMEKECPFIKPEVKPGTPAQEIEMLKRNKIYFMQRQDVLDKNHVADIDKLIDYAASGDPTSPDNIDSPNAPWVFACAPDRCPPTCIYVAGMAELGAFFSILQDMRNTIMASKTVGTAEEKLKKKSSFYQSYLRRTQSMGIQLDQRIILLFMLEWGKEMVDHFHLGDDMDPELRGLAQALIDQKVKEISNQEPLKI.

The segment at 1–50 is rdRP binding; the sequence is MSDLTDIQEDITRHEQQLIVARQKLKDAERAVEVDPDDVNKNTLQARQQT. 2 homomultimerization regions span residues 1–79 and 100–125; these read MSDL…TKPT and NVLDVNAIDIEEPSGQTADWYTIGVY. The tract at residues 1 to 100 is chaperone activity; sequence MSDLTDIQED…KERSSLRYGN (100 aa). Residues 1–175 form a viral panhandle binding region; the sequence is MSDLTDIQED…EDINGIRRPK (175 aa). A coiled-coil region spans residues 4–71; the sequence is LTDIQEDITR…KRRMADAVSR (68 aa). The segment covering 67-78 has biased composition (basic and acidic residues); the sequence is DAVSRKKMDTKP. The segment at 67–89 is disordered; sequence DAVSRKKMDTKPTDPTGIEPDDH. Residues 80–248 are interaction with glycoprotein N; sequence DPTGIEPDDH…FMEKECPFIK (169 aa). The interval 150-175 is interaction with host RPS19; the sequence is KENKGTRIRFKDDTSFEDINGIRRPK. Residues 175–217 are viral RNA-binding; sequence KHLYVSMPTAQSTMKAEELTPGRFRTIVCGLFPTQIQVRNIMS. The short motif at 178-181 is the YxxL element; that stretch reads YVSM. The interaction with host UBE2I/UBC9 stretch occupies residues 188-191; sequence MKAE. Residues 377–425 form a homomultimerization region; sequence GIQLDQRIILLFMLEWGKEMVDHFHLGDDMDPELRGLAQALIDQKVKEI. The interaction with host DAXX stretch occupies residues 377–433; the sequence is GIQLDQRIILLFMLEWGKEMVDHFHLGDDMDPELRGLAQALIDQKVKEISNQEPLKI.

This sequence belongs to the hantavirus nucleocapsid protein family. As to quaternary structure, homotrimer. Homomultimer. Homomultimerizes and binds to viral genomic RNA to form the nucleocapsid. Interacts with host MAP1LC3B; this interaction participates to the protection of Gn from virus-triggered autophagy. Interacts with host SNAP29; this interaction participates to the protection of glycoprotein N from virus-triggered autophagy. Interacts (via N-terminus) with host RPS19; this interaction probably mediates the loading of the 40S ribosomal subunit on viral capped mRNA during N-mediated translation initiation. Interacts with the viral RdRp. Interacts with host SUMO1 (via N-terminus). Interacts with host DAXX. Interacts (via C-terminus) with the viral glycoprotein N. Interacts (via C-terminus) with the viral glycoprotein C.

The protein localises to the virion. It localises to the host cytoplasm. Its subcellular location is the host perinuclear region. It is found in the host Golgi apparatus. The protein resides in the host cis-Golgi network. Encapsidates the genome protecting it from nucleases. The encapsidated genomic RNA is termed the nucleocapsid (NC) and serves as template for transcription and replication. The nucleocapsid has a left-handed helical structure. As a trimer, specifically binds and acts as a chaperone to unwind the panhandle structure formed by the viral RNA (vRNA) termini. Involved in the transcription and replication initiation of vRNA by mediating primer annealing. Plays a role in cap snatching by sequestering capped RNAs in P bodies for use by the viral RdRp during transcription initiation. Substitutes for the cellular cap-binding complex (eIF4F) to preferentially facilitate the translation of capped mRNAs. Initiates the translation by specifically binding to the cap and 40S ribosomal subunit. Prevents the viral glycoprotein N (Gn) from autophagy-dependent breakdown maybe by blocking autophagosome formation. Inhibits host EIF2AK2/PKR dimerization to prevent PKR-induced translational shutdown in cells and thus the activation of the antiviral state. Also displays sequence-unspecific DNA endonuclease activity. The chain is Nucleoprotein (N) from Homo sapiens (Human).